Reading from the N-terminus, the 2195-residue chain is Genome polyprotein (2195 aa).

Residue Gly2 is the site of N-myristoyl glycine; by host attachment. The Cytoplasmic segment spans residues 2–1505 (GAQVSTQKTG…HVSRAFICLQ (1504 aa)). The tract at residues 567 to 583 (LLQGDVVEAVENAVARV) is amphipathic alpha-helix. Active-site for protease 2A activity residues include His882 and Asp900. Residues Cys917 and Cys919 each contribute to the Zn(2+) site. The active-site For protease 2A activity is the Cys971. Positions 977 and 979 each coordinate Zn(2+). The interval 1111–1183 (NNGWLKKFTE…EQSAPSQSDQ (73 aa)) is membrane-binding. Residues 1111–1249 (NNGWLKKFTE…SPGAGKSVAT (139 aa)) form an oligomerization region. The RNA-binding stretch occupies residues 1132–1136 (SIKIQ). The SF3 helicase domain occupies 1215-1371 (EKKMSNYIQF…SMYSQNGKIN (157 aa)). Residues Cys1379, Cys1391, and Cys1396 each coordinate Zn(2+). The C4-type; degenerate zinc finger occupies 1379 to 1396 (CDEECCPVNFKRCCPLVC). The tract at residues 1423 to 1430 (EYNHRHSV) is RNA-binding. Residues 1434 to 1439 (LEALFQ) form an oligomerization region. An intramembrane segment occupies 1506–1521 (ALTTFVSVAGIIYIIY). At 1522–2195 (KLFAGFQGAY…TLRRKWLDSF (674 aa)) the chain is on the cytoplasmic side. Tyr1531 is modified (O-(5'-phospho-RNA)-tyrosine). Positions 1551–1729 (GPAFEFAVAM…FSAALLKHYF (179 aa)) constitute a Peptidase C3 domain. Active-site for protease 3C activity residues include His1590, Glu1621, and Cys1697. One can recognise a RdRp catalytic domain in the interval 1960–2076 (GHLIAFDYSG…SYPWPIDASL (117 aa)). Residues Asp1966 and Asp2062 each contribute to the Mg(2+) site.

The protein belongs to the picornaviruses polyprotein family. In terms of assembly, interacts with capsid protein VP1 and capsid protein VP3 to form heterotrimeric protomers. Interacts with capsid protein VP0, and capsid protein VP3 to form heterotrimeric protomers. Five protomers subsequently associate to form pentamers which serve as building blocks for the capsid. Interacts with capsid protein VP2, capsid protein VP3 and capsid protein VP4 following cleavage of capsid protein VP0. As to quaternary structure, interacts with capsid protein VP1 and capsid protein VP3 in the mature capsid. In terms of assembly, interacts with capsid protein VP0 and capsid protein VP1 to form heterotrimeric protomers. Five protomers subsequently associate to form pentamers which serve as building blocks for the capsid. Interacts with capsid protein VP4 in the mature capsid. Interacts with protein 2C; this interaction may be important for virion morphogenesis. Interacts with capsid protein VP1 and capsid protein VP3. As to quaternary structure, homodimer. In terms of assembly, homohexamer; forms a hexameric ring structure with 6-fold symmetry characteristic of AAA+ ATPases. Interacts (via N-terminus) with host RTN3 (via reticulon domain); this interaction is important for viral replication. Interacts with capsid protein VP3; this interaction may be important for virion morphogenesis. Interacts with protein 3CD. As to quaternary structure, homodimer. Interacts with host GBF1. Interacts (via GOLD domain) with host ACBD3 (via GOLD domain); this interaction allows the formation of a viral protein 3A/ACBD3 heterotetramer with a 2:2 stoichiometry, which will stimulate the recruitment of host PI4KB in order to synthesize PI4P at the viral RNA replication sites. In terms of assembly, interacts with RNA-directed RNA polymerase. Interacts with protein 3AB and with RNA-directed RNA polymerase. As to quaternary structure, interacts with Viral protein genome-linked and with protein 3CD. Mg(2+) serves as cofactor. Specific enzymatic cleavages in vivo by the viral proteases yield processing intermediates and the mature proteins. Post-translationally, myristoylation is required for the formation of pentamers during virus assembly. Further assembly of 12 pentamers and a molecule of genomic RNA generates the provirion. In terms of processing, during virion maturation, immature virions are rendered infectious following cleavage of VP0 into VP4 and VP2. This maturation seems to be an autocatalytic event triggered by the presence of RNA in the capsid and it is followed by a conformational change infectious virion. Myristoylation is required during RNA encapsidation and formation of the mature virus particle. Post-translationally, VPg is uridylylated by the polymerase into VPg-pUpU. This acts as a nucleotide-peptide primer for the genomic RNA replication.

Its subcellular location is the virion. The protein resides in the host cytoplasm. The protein localises to the host cytoplasmic vesicle membrane. It localises to the host nucleus. The catalysed reaction is a ribonucleoside 5'-triphosphate + H2O = a ribonucleoside 5'-diphosphate + phosphate + H(+). The enzyme catalyses Selective cleavage of Tyr-|-Gly bond in the picornavirus polyprotein.. It catalyses the reaction RNA(n) + a ribonucleoside 5'-triphosphate = RNA(n+1) + diphosphate. It carries out the reaction Selective cleavage of Gln-|-Gly bond in the poliovirus polyprotein. In other picornavirus reactions Glu may be substituted for Gln, and Ser or Thr for Gly.. Replication or transcription is subject to high level of random mutations by the nucleotide analog ribavirin. Forms an icosahedral capsid of pseudo T=3 symmetry with capsid proteins VP2 and VP3. The capsid is 300 Angstroms in diameter, composed of 60 copies of each capsid protein and enclosing the viral positive strand RNA genome. Capsid protein VP1 mainly forms the vertices of the capsid. Capsid protein VP1 interacts with host cell receptor to provide virion attachment to target host cells. This attachment induces virion internalization. Tyrosine kinases are probably involved in the entry process. After binding to its receptor, the capsid undergoes conformational changes. Capsid protein VP1 N-terminus (that contains an amphipathic alpha-helix) and capsid protein VP4 are externalized. Together, they shape a pore in the host membrane through which viral genome is translocated to host cell cytoplasm. Its function is as follows. Forms an icosahedral capsid of pseudo T=3 symmetry with capsid proteins VP2 and VP3. The capsid is 300 Angstroms in diameter, composed of 60 copies of each capsid protein and enclosing the viral positive strand RNA genome. Functionally, lies on the inner surface of the capsid shell. After binding to the host receptor, the capsid undergoes conformational changes. Capsid protein VP4 is released, Capsid protein VP1 N-terminus is externalized, and together, they shape a pore in the host membrane through which the viral genome is translocated into the host cell cytoplasm. In terms of biological role, component of immature procapsids, which is cleaved into capsid proteins VP4 and VP2 after maturation. Allows the capsid to remain inactive before the maturation step. Cysteine protease that cleaves viral polyprotein and specific host proteins. It is responsible for the autocatalytic cleavage between the P1 and P2 regions, which is the first cleavage occurring in the polyprotein. Also cleaves the host translation initiation factor EIF4G1, in order to shut down the capped cellular mRNA translation. Inhibits the host nucleus-cytoplasm protein and RNA trafficking by cleaving host members of the nuclear pores. Counteracts stress granule formation probably by antagonizing its assembly or promoting its dissassembly. Its function is as follows. Plays an essential role in the virus replication cycle by acting as a viroporin. Creates a pore in the host endoplasmic reticulum and as a consequence releases Ca2+ in the cytoplasm of infected cell. In turn, high levels of cytoplasmic calcium may trigger membrane trafficking and transport of viral ER-associated proteins to viroplasms, sites of viral genome replication. Functionally, induces and associates with structural rearrangements of intracellular membranes. Displays RNA-binding, nucleotide binding and NTPase activities. May play a role in virion morphogenesis and viral RNA encapsidation by interacting with the capsid protein VP3. In terms of biological role, localizes the viral replication complex to the surface of membranous vesicles. Together with protein 3CD binds the Cis-Active RNA Element (CRE) which is involved in RNA synthesis initiation. Acts as a cofactor to stimulate the activity of 3D polymerase, maybe through a nucleid acid chaperone activity. Localizes the viral replication complex to the surface of membranous vesicles. It inhibits host cell endoplasmic reticulum-to-Golgi apparatus transport and causes the disassembly of the Golgi complex, possibly through GBF1 interaction. This would result in depletion of MHC, trail receptors and IFN receptors at the host cell surface. Plays an essential role in viral RNA replication by recruiting ACBD3 and PI4KB at the viral replication sites, thereby allowing the formation of the rearranged membranous structures where viral replication takes place. Its function is as follows. Acts as a primer for viral RNA replication and remains covalently bound to viral genomic RNA. VPg is uridylylated prior to priming replication into VPg-pUpU. The oriI viral genomic sequence may act as a template for this. The VPg-pUpU is then used as primer on the genomic RNA poly(A) by the RNA-dependent RNA polymerase to replicate the viral genome. During genome replication, the VPg-RNA linkage is removed by the host TDP2, thereby accelerating replication. During the late stage of the replication cycle, host TDP2 is excluded from sites of viral RNA synthesis and encapsidation, allowing for the generation of progeny virions. Functionally, involved in the viral replication complex and viral polypeptide maturation. It exhibits protease activity with a specificity and catalytic efficiency that is different from protease 3C. Protein 3CD lacks polymerase activity. The 3C domain in the context of protein 3CD may have an RNA binding activity. Protein 3CD binds to the 5'UTR of the viral genome. In terms of biological role, replicates the viral genomic RNA on the surface of intracellular membranes. May form linear arrays of subunits that propagate along a strong head-to-tail interaction called interface-I. Covalently attaches UMP to a tyrosine of VPg, which is used to prime RNA synthesis. The positive stranded RNA genome is first replicated at virus induced membranous vesicles, creating a dsRNA genomic replication form. This dsRNA is then used as template to synthesize positive stranded RNA genomes. ss(+)RNA genomes are either translated, replicated or encapsidated. Major viral protease that mediates proteolytic processing of the polyprotein. Cleaves host EIF5B, contributing to host translation shutoff. Also cleaves host PABPC1, contributing to host translation shutoff. Cleaves host NLRP1, triggers host N-glycine-mediated degradation of the autoinhibitory NLRP1 N-terminal fragment. The sequence is that of Genome polyprotein from Echovirus 11 (strain Gregory).